The chain runs to 310 residues: MNENSRLHTHSNIRNTFFSEIGIGISGNSFLLLFHIIKFFRGHRPRLTDLPIGLLSLIHLLMLLVAAVIATDIFISWRGWNDIICKFLVYLYRSLRGLSLCTTSMLSVLQAIILSPRSYCLAKFKRKSSHNISCAIIFLSVLYMSISSHLFISITATLNLTMNNFLYVSQSCSLLPLSYLMQSMYSTLLVLREVFLIGLMVLSTSYMVALLCMHRKQAQNLQGTSLSLKTAPEQRATQTILMLMTFFVLMSIFDSIVSSSRAMFLDDSTCYSIYIFVMHIYATVSPFVFMSTEKHLVNFFRSMCEWIINM.

The Extracellular segment spans residues 1 to 16 (MNENSRLHTHSNIRNT). A helical membrane pass occupies residues 17–37 (FFSEIGIGISGNSFLLLFHII). Residues 38-49 (KFFRGHRPRLTD) are Cytoplasmic-facing. Residues 50-70 (LPIGLLSLIHLLMLLVAAVIA) traverse the membrane as a helical segment. At 71-91 (TDIFISWRGWNDIICKFLVYL) the chain is on the extracellular side. The cysteines at positions 85 and 172 are disulfide-linked. A helical membrane pass occupies residues 92–114 (YRSLRGLSLCTTSMLSVLQAIIL). Residues 115 to 131 (SPRSYCLAKFKRKSSHN) lie on the Cytoplasmic side of the membrane. The helical transmembrane segment at 132–152 (ISCAIIFLSVLYMSISSHLFI) threads the bilayer. The Extracellular portion of the chain corresponds to 153–193 (SITATLNLTMNNFLYVSQSCSLLPLSYLMQSMYSTLLVLRE). N-linked (GlcNAc...) asparagine glycosylation occurs at Asn-159. Residues 194–214 (VFLIGLMVLSTSYMVALLCMH) form a helical membrane-spanning segment. Topologically, residues 215–238 (RKQAQNLQGTSLSLKTAPEQRATQ) are cytoplasmic. A helical membrane pass occupies residues 239–259 (TILMLMTFFVLMSIFDSIVSS). The Extracellular portion of the chain corresponds to 260–269 (SRAMFLDDST). Residues 270 to 290 (CYSIYIFVMHIYATVSPFVFM) traverse the membrane as a helical segment. Residues 291–310 (STEKHLVNFFRSMCEWIINM) lie on the Cytoplasmic side of the membrane.

This sequence belongs to the G-protein coupled receptor 1 family.

It localises to the cell membrane. Putative pheromone receptor implicated in the regulation of social and reproductive behavior. The sequence is that of Vomeronasal type-1 receptor 47 (Vmn1r47) from Mus musculus (Mouse).